A 51-amino-acid polypeptide reads, in one-letter code: Insulin (51 aa).

3 disulfide bridges follow: C7–C36, C19–C49, and C35–C40.

It belongs to the insulin family. In terms of assembly, heterodimer of a B chain and an A chain linked by two disulfide bonds.

The protein resides in the secreted. Functionally, insulin decreases blood glucose concentration. It increases cell permeability to monosaccharides, amino acids and fatty acids. It accelerates glycolysis, the pentose phosphate cycle, and glycogen synthesis in liver. The chain is Insulin (INS) from Myocastor coypus (Coypu).